Here is a 356-residue protein sequence, read N- to C-terminus: Heparan sulfate 2-O-sulfotransferase 1 (356 aa).

Over 1–11 (MGLLRIMMPPK) the chain is Cytoplasmic. A helical; Signal-anchor for type II membrane protein transmembrane segment spans residues 12–28 (LQLLAVVAFAVAMLFLE). Residues 24–51 (MLFLENQIQKLEESRSKLERAIARHEVR) adopt a coiled-coil conformation. The Lumenal segment spans residues 29 to 356 (NQIQKLEESR…FYEKIYPKSN (328 aa)). Adenosine 3',5'-bisphosphate is bound by residues Lys-83, Thr-84, Ala-85, Ser-86, Thr-87, and Ser-88. N-linked (GlcNAc...) asparagine glycans are attached at residues Asn-108 and Asn-127. Active-site residues include His-140 and His-142. The adenosine 3',5'-bisphosphate site is built by Arg-164 and Ser-172. Cystine bridges form between Cys-201/Cys-209 and Cys-222/Cys-228. Adenosine 3',5'-bisphosphate is bound by residues Tyr-279, Ser-285, Thr-290, and Lys-293.

The protein belongs to the sulfotransferase 3 family. As to quaternary structure, homotrimer. Interacts with the C5-epimerase GLCE. N-glycosylated.

Its subcellular location is the golgi apparatus membrane. Catalyzes the transfer of a sulfo group from 3'-phospho-5'-adenylyl sulfate (PAPS) to the 2-OH position of iduronic acid (IdoA) or glucuronic acid (GlcA) within the heparan sulfate (HS) chain and participates in HS biosynthesis. Required for metanephric development of kidney formation, suggesting that 2-O-sulfation within HS is essential for signaling between ureteric bud and metanephric mesenchyme. This Pongo abelii (Sumatran orangutan) protein is Heparan sulfate 2-O-sulfotransferase 1.